Reading from the N-terminus, the 206-residue chain is Bacteriochlorophyll synthase 23 kDa chain (206 aa).

It participates in porphyrin-containing compound metabolism; bacteriochlorophyll biosynthesis (light-independent). The protein is Bacteriochlorophyll synthase 23 kDa chain (bchJ) of Cereibacter sphaeroides (strain ATCC 17023 / DSM 158 / JCM 6121 / CCUG 31486 / LMG 2827 / NBRC 12203 / NCIMB 8253 / ATH 2.4.1.) (Rhodobacter sphaeroides).